A 20-amino-acid chain; its full sequence is Protein PR-L1 (20 aa).

The protein belongs to the BetVI family.

This chain is Protein PR-L1, found in Lupinus luteus (European yellow lupine).